Reading from the N-terminus, the 479-residue chain is Variant surface glycoprotein ILTAT 1.22 (479 aa).

The N-terminal stretch at 1–12 is a signal peptide; the sequence is MDTAQVFALFYM. Residues N120 and N458 are each glycosylated (N-linked (GlcNAc...) asparagine). N462 carries GPI-anchor amidated asparagine lipidation. The propeptide at 463-479 is removed in mature form; that stretch reads NSFAIKTSTLLLAVLLF.

The protein localises to the cell membrane. Its function is as follows. VSG forms a coat on the surface of the parasite. The trypanosome evades the immune response of the host by expressing a series of antigenically distinct VSGs from an estimated 1000 VSG genes. The protein is Variant surface glycoprotein ILTAT 1.22 of Trypanosoma brucei brucei.